The chain runs to 360 residues: 3-dehydroquinate synthase (360 aa).

Residues 71 to 76, 105 to 109, 129 to 130, lysine 142, lysine 151, and 169 to 172 each bind NAD(+); these read DGEQYK, GVVGD, TT, and TLNT. Zn(2+) is bound by residues glutamate 184, histidine 248, and histidine 265.

The protein belongs to the sugar phosphate cyclases superfamily. Dehydroquinate synthase family. The cofactor is Co(2+). Zn(2+) is required as a cofactor. NAD(+) serves as cofactor.

The protein localises to the cytoplasm. The enzyme catalyses 7-phospho-2-dehydro-3-deoxy-D-arabino-heptonate = 3-dehydroquinate + phosphate. Its pathway is metabolic intermediate biosynthesis; chorismate biosynthesis; chorismate from D-erythrose 4-phosphate and phosphoenolpyruvate: step 2/7. Catalyzes the conversion of 3-deoxy-D-arabino-heptulosonate 7-phosphate (DAHP) to dehydroquinate (DHQ). The protein is 3-dehydroquinate synthase of Coxiella burnetii (strain CbuG_Q212) (Coxiella burnetii (strain Q212)).